We begin with the raw amino-acid sequence, 133 residues long: ATP synthase epsilon chain, chloroplastic (133 aa).

This sequence belongs to the ATPase epsilon chain family. In terms of assembly, F-type ATPases have 2 components, CF(1) - the catalytic core - and CF(0) - the membrane proton channel. CF(1) has five subunits: alpha(3), beta(3), gamma(1), delta(1), epsilon(1). CF(0) has three main subunits: a, b and c.

It localises to the plastid. The protein resides in the chloroplast thylakoid membrane. In terms of biological role, produces ATP from ADP in the presence of a proton gradient across the membrane. In Atropa belladonna (Belladonna), this protein is ATP synthase epsilon chain, chloroplastic.